A 426-amino-acid chain; its full sequence is 3',5'-cyclic-nucleotide phosphodiesterase (426 aa).

The segment at 210-229 (DKEDAQHHSNSNSNSNNIWG) is disordered.

It belongs to the cyclic nucleotide phosphodiesterase class-II family.

It carries out the reaction a nucleoside 3',5'-cyclic phosphate + H2O = a nucleoside 5'-phosphate + H(+). The protein is 3',5'-cyclic-nucleotide phosphodiesterase (PDE1) of Candida albicans (Yeast).